Here is a 347-residue protein sequence, read N- to C-terminus: N-acetyl-gamma-glutamyl-phosphate reductase (347 aa).

The active site involves Cys-152.

The protein belongs to the NAGSA dehydrogenase family. Type 1 subfamily.

It localises to the cytoplasm. It catalyses the reaction N-acetyl-L-glutamate 5-semialdehyde + phosphate + NADP(+) = N-acetyl-L-glutamyl 5-phosphate + NADPH + H(+). It functions in the pathway amino-acid biosynthesis; L-arginine biosynthesis; N(2)-acetyl-L-ornithine from L-glutamate: step 3/4. Functionally, catalyzes the NADPH-dependent reduction of N-acetyl-5-glutamyl phosphate to yield N-acetyl-L-glutamate 5-semialdehyde. In Neisseria meningitidis serogroup C (strain 053442), this protein is N-acetyl-gamma-glutamyl-phosphate reductase.